Reading from the N-terminus, the 363-residue chain is Protein U2 (363 aa).

The first 18 residues, 1–18 (MFCRSPFLGISSWSLASA), serve as a signal peptide directing secretion.

The chain is Protein U2 (U2) from Homo sapiens (Human).